The chain runs to 197 residues: 7-methyl-GTP pyrophosphatase (197 aa).

The active-site Proton acceptor is Asp-69.

It belongs to the Maf family. YceF subfamily. It depends on a divalent metal cation as a cofactor.

It localises to the cytoplasm. It carries out the reaction N(7)-methyl-GTP + H2O = N(7)-methyl-GMP + diphosphate + H(+). In terms of biological role, nucleoside triphosphate pyrophosphatase that hydrolyzes 7-methyl-GTP (m(7)GTP). May have a dual role in cell division arrest and in preventing the incorporation of modified nucleotides into cellular nucleic acids. This chain is 7-methyl-GTP pyrophosphatase, found in Pectobacterium atrosepticum (strain SCRI 1043 / ATCC BAA-672) (Erwinia carotovora subsp. atroseptica).